Here is a 328-residue protein sequence, read N- to C-terminus: uncharacterized protein (328 aa).

It to the C-terminal of para-aminobenzoate synthase component I.

This is an uncharacterized protein from Haemophilus influenzae (strain ATCC 51907 / DSM 11121 / KW20 / Rd).